The following is a 535-amino-acid chain: T-complex protein 1 subunit epsilon (535 aa).

This sequence belongs to the TCP-1 chaperonin family. In terms of assembly, heterooligomeric complex of about 850 to 900 kDa that forms two stacked rings, 12 to 16 nm in diameter.

Its subcellular location is the cytoplasm. Functionally, molecular chaperone; assists the folding of proteins upon ATP hydrolysis. Known to play a role, in vitro, in the folding of actin and tubulin. The sequence is that of T-complex protein 1 subunit epsilon from Arabidopsis thaliana (Mouse-ear cress).